The sequence spans 688 residues: Glycine--tRNA ligase beta subunit (688 aa).

The protein belongs to the class-II aminoacyl-tRNA synthetase family. In terms of assembly, tetramer of two alpha and two beta subunits.

The protein resides in the cytoplasm. It carries out the reaction tRNA(Gly) + glycine + ATP = glycyl-tRNA(Gly) + AMP + diphosphate. This is Glycine--tRNA ligase beta subunit from Colwellia psychrerythraea (strain 34H / ATCC BAA-681) (Vibrio psychroerythus).